A 212-amino-acid polypeptide reads, in one-letter code: Large ribosomal subunit protein uL3 (212 aa).

Q153 is modified (N5-methylglutamine).

Belongs to the universal ribosomal protein uL3 family. Part of the 50S ribosomal subunit. Forms a cluster with proteins L14 and L19. Post-translationally, methylated by PrmB.

Functionally, one of the primary rRNA binding proteins, it binds directly near the 3'-end of the 23S rRNA, where it nucleates assembly of the 50S subunit. The protein is Large ribosomal subunit protein uL3 of Azoarcus sp. (strain BH72).